Here is a 1055-residue protein sequence, read N- to C-terminus: Activated CDC42 kinase 1 (1055 aa).

The tract at residues 1–110 is SAM-like domain; sequence MQPEEGTGWL…PSPTPGSLPG (110 aa). Positions 91–110 are disordered; sequence SQHSQSTFRKPSPTPGSLPG. Residue Thr-113 is modified to Phosphothreonine. The Protein kinase domain maps to 126-385; sequence LRLLEKLGDG…PTFVALRDFL (260 aa). Residues 132–140 and Lys-158 each bind ATP; that span reads LGDGSFGVV. Asp-252 (proton acceptor) is an active-site residue. Position 284 is a phosphotyrosine; by SRC and autocatalysis (Tyr-284). The SH3 domain occupies 388–448; it reads AQPTDMRALQ…PRNVVTSVAG (61 aa). Residues 454–466 form the CRIB domain; that stretch reads ISQPLQNSFIHTG. A disordered region spans residues 505-548; the sequence is RPTQHLGRVKREPPPRPPQPAIFTQKTTYDPVSEDPDPLSSDFK. Phosphotyrosine occurs at positions 518 and 533. Residues 638-667 are required for interaction with SRC; sequence DWDARPLPPPPAYDDVAQDEDDFEVCSINS. Residues 647–650 are required for interaction with NEDD4; sequence PPAY. The tract at residues 737-855 is disordered; sequence TGQLTPSPTP…QVIQAPGPRA (119 aa). The tract at residues 748-891 is EBD domain; the sequence is GDDKPQVPPR…PYLERYQRFL (144 aa). Pro residues-rich tracts occupy residues 753–764 and 787–798; these read QVPPRVPIPPRP and PASPPRVPPREP. Residues 817-827 are compositionally biased toward low complexity; that stretch reads PLPHRLSSSPG. Phosphotyrosine is present on Tyr-842. Residue Arg-854 is modified to Omega-N-methylarginine. A phosphotyrosine mark is found at Tyr-874 and Tyr-887. A Phosphoserine modification is found at Ser-896. A disordered region spans residues 896-952; sequence SPEEPAALPVPPLLPPPSTPAPAAPTATVRPMPQAAPDPKANFSTNNSNPGARPPSL. Positions 903-918 are enriched in pro residues; the sequence is LPVPPLLPPPSTPAPA. Positions 973–1013 constitute a UBA domain; sequence PADKVQMLQAMVHGVTTEECQAALQSHSWSVQRAAQYLKVE.

The protein belongs to the protein kinase superfamily. Tyr protein kinase family. As to quaternary structure, homodimer. Interacts with CSPG4 (activated). Interacts with MERTK (activated); stimulates autophosphorylation. May interact (phosphorylated) with HSP90AB1; maintains kinase activity. Interacts with NPHP1. Interacts with SNX9 (via SH3 domain). Interacts with SRC (via SH2 and SH3 domain). Part of a collagen stimulated complex involved in cell migration composed of CDC42, CRK, TNK2 and BCAR1/p130cas. Interacts with BCAR1/p130cas via SH3 domains. Forms complexes with GRB2 and numerous receptor tyrosine kinases (RTK) including LTK, AXL or PDGFRL, in which GRB2 promotes RTK recruitment by TNK2. Interacts with CDC42. Interacts with EGFR, and this interaction is dependent on EGF stimulation and kinase activity of EGFR. Interacts (via kinase domain) with AKT1. Interacts with NEDD4 (via WW3 domain). NEDD4L and EGF promote association with NEDD4. Requires Mg(2+) as cofactor. In terms of processing, autophosphorylation regulates kinase activity. Phosphorylation on Tyr-533 is required for interaction with SRC and is observed during association with clathrin-coated pits. Post-translationally, polyubiquitinated by NEDD4 and NEDD4L. Degradation can be induced by EGF and is lysosome-dependent. Ubiquitously present in all tissues tested. Highly expressed in the adult central nervous system (CNS); hippocampus, neocortex, and cerebellum, both at dendritic spines and presynaptic axon terminals. Levels are strongly increased during enhanced neural activity.

The protein resides in the cell membrane. It localises to the nucleus. The protein localises to the endosome. Its subcellular location is the cell junction. It is found in the adherens junction. The protein resides in the cytoplasmic vesicle membrane. It localises to the cytoplasmic vesicle. The protein localises to the clathrin-coated vesicle. Its subcellular location is the membrane. It is found in the clathrin-coated pit. The protein resides in the cytoplasm. It localises to the cytosol. It carries out the reaction L-tyrosyl-[protein] + ATP = O-phospho-L-tyrosyl-[protein] + ADP + H(+). It catalyses the reaction L-seryl-[protein] + ATP = O-phospho-L-seryl-[protein] + ADP + H(+). The catalysed reaction is L-threonyl-[protein] + ATP = O-phospho-L-threonyl-[protein] + ADP + H(+). Non-receptor tyrosine-protein and serine/threonine-protein kinase that is implicated in cell spreading and migration, cell survival, cell growth and proliferation. Transduces extracellular signals to cytosolic and nuclear effectors. Phosphorylates AKT1, AR, MCF2, WASL and WWOX. Implicated in trafficking and clathrin-mediated endocytosis through binding to epidermal growth factor receptor (EGFR) and clathrin. Binds to both poly- and mono-ubiquitin and regulates ligand-induced degradation of EGFR, thereby contributing to the accumulation of EGFR at the limiting membrane of early endosomes. Downstream effector of CDC42 which mediates CDC42-dependent cell migration via phosphorylation of BCAR1. May be involved both in adult synaptic function and plasticity and in brain development. Activates AKT1 by phosphorylating it on 'Tyr-176'. Phosphorylates AR on 'Tyr-267' and 'Tyr-363' thereby promoting its recruitment to androgen-responsive enhancers (AREs). Phosphorylates WWOX on 'Tyr-287'. Phosphorylates MCF2, thereby enhancing its activity as a guanine nucleotide exchange factor (GEF) toward Rho family proteins. Contributes to the control of AXL receptor levels. Confers metastatic properties on cancer cells and promotes tumor growth by negatively regulating tumor suppressor such as WWOX and positively regulating pro-survival factors such as AKT1 and AR. This is Activated CDC42 kinase 1 (Tnk2) from Mus musculus (Mouse).